A 39-amino-acid chain; its full sequence is uncharacterized protein (39 aa).

This is an uncharacterized protein from Dictyostelium discoideum (Social amoeba).